We begin with the raw amino-acid sequence, 98 residues long: Serine protease inhibitor Kazal-type 14 (98 aa).

The signal sequence occupies residues 1 to 23; sequence MVKYFQVLWSLLFSIMLHSMLLA. One can recognise a Kazal-like domain in the interval 35–98; it reads GLIKIKCPYK…QIRYYHTGRC (64 aa). Cystine bridges form between C41–C80, C58–C77, and C66–C98. An N-linked (GlcNAc...) asparagine glycan is attached at N52.

It localises to the secreted. In terms of biological role, may be a serine protease inhibitor. The protein is Serine protease inhibitor Kazal-type 14 (Spink14) of Rattus norvegicus (Rat).